A 396-amino-acid polypeptide reads, in one-letter code: Elongation factor Tu (396 aa).

A tr-type G domain is found at 10–206; that stretch reads KAHVNIGTIG…AVDEYIPDPV (197 aa). A G1 region spans residues 19–26; the sequence is GHVDHGKT. 19–26 contributes to the GTP binding site; that stretch reads GHVDHGKT. Threonine 26 is a Mg(2+) binding site. The G2 stretch occupies residues 62–66; sequence GITIN. The segment at 83–86 is G3; sequence DAPG. Residues 83-87 and 138-141 contribute to the GTP site; these read DAPGH and NKSD. A G4 region spans residues 138–141; that stretch reads NKSD. The tract at residues 176–178 is G5; sequence SAL.

This sequence belongs to the TRAFAC class translation factor GTPase superfamily. Classic translation factor GTPase family. EF-Tu/EF-1A subfamily. Monomer.

Its subcellular location is the cytoplasm. The catalysed reaction is GTP + H2O = GDP + phosphate + H(+). Functionally, GTP hydrolase that promotes the GTP-dependent binding of aminoacyl-tRNA to the A-site of ribosomes during protein biosynthesis. This chain is Elongation factor Tu, found in Micrococcus luteus (Micrococcus lysodeikticus).